The primary structure comprises 197 residues: Recombination protein RecR (197 aa).

The C4-type zinc-finger motif lies at 56-71 (CHVCGNYCESDTCNIC). Positions 79 to 174 (RIICVVEESK…KITKLASGIP (96 aa)) constitute a Toprim domain.

This sequence belongs to the RecR family.

Functionally, may play a role in DNA repair. It seems to be involved in an RecBC-independent recombinational process of DNA repair. It may act with RecF and RecO. This Fusobacterium nucleatum subsp. nucleatum (strain ATCC 25586 / DSM 15643 / BCRC 10681 / CIP 101130 / JCM 8532 / KCTC 2640 / LMG 13131 / VPI 4355) protein is Recombination protein RecR.